A 518-amino-acid chain; its full sequence is Glutamate--cysteine ligase (518 aa).

It belongs to the glutamate--cysteine ligase type 1 family. Type 1 subfamily.

It carries out the reaction L-cysteine + L-glutamate + ATP = gamma-L-glutamyl-L-cysteine + ADP + phosphate + H(+). Its pathway is sulfur metabolism; glutathione biosynthesis; glutathione from L-cysteine and L-glutamate: step 1/2. This is Glutamate--cysteine ligase from Escherichia coli O157:H7.